The primary structure comprises 211 residues: ATP phosphoribosyltransferase (211 aa).

The protein belongs to the ATP phosphoribosyltransferase family. Short subfamily. As to quaternary structure, heteromultimer composed of HisG and HisZ subunits.

The protein resides in the cytoplasm. The enzyme catalyses 1-(5-phospho-beta-D-ribosyl)-ATP + diphosphate = 5-phospho-alpha-D-ribose 1-diphosphate + ATP. It participates in amino-acid biosynthesis; L-histidine biosynthesis; L-histidine from 5-phospho-alpha-D-ribose 1-diphosphate: step 1/9. Its function is as follows. Catalyzes the condensation of ATP and 5-phosphoribose 1-diphosphate to form N'-(5'-phosphoribosyl)-ATP (PR-ATP). Has a crucial role in the pathway because the rate of histidine biosynthesis seems to be controlled primarily by regulation of HisG enzymatic activity. This chain is ATP phosphoribosyltransferase, found in Sorangium cellulosum (strain So ce56) (Polyangium cellulosum (strain So ce56)).